The following is a 70-amino-acid chain: ATP synthase subunit epsilon, mitochondrial (70 aa).

The protein belongs to the eukaryotic ATPase epsilon family. As to quaternary structure, F-type ATPases have 2 components, CF(1) - the catalytic core - and CF(0) - the membrane proton channel. CF(1) has five subunits: alpha(3), beta(3), gamma(1), delta(1), epsilon(1). CF(0) has three main subunits: a, b and c.

The protein resides in the mitochondrion. It is found in the mitochondrion inner membrane. Its function is as follows. Mitochondrial membrane ATP synthase (F(1)F(0) ATP synthase or Complex V) produces ATP from ADP in the presence of a proton gradient across the membrane which is generated by electron transport complexes of the respiratory chain. F-type ATPases consist of two structural domains, F(1) - containing the extramembraneous catalytic core, and F(0) - containing the membrane proton channel, linked together by a central stalk and a peripheral stalk. During catalysis, ATP synthesis in the catalytic domain of F(1) is coupled via a rotary mechanism of the central stalk subunits to proton translocation. Part of the complex F(1) domain and of the central stalk which is part of the complex rotary element. Rotation of the central stalk against the surrounding alpha(3)beta(3) subunits leads to hydrolysis of ATP in three separate catalytic sites on the beta subunits. The sequence is that of ATP synthase subunit epsilon, mitochondrial from Zea mays (Maize).